Reading from the N-terminus, the 687-residue chain is Carboxysome assembly protein CcmM (687 aa).

Positions 242–327 (SINSDITNQI…RVVEVIIQRP (86 aa)) are rbcS-like repeat 1, SSUL1. Disordered regions lie at residues 328 to 355 (GDVP…SAVA) and 442 to 476 (VHRP…SSAG). Residues 335–346 (SRGTTTTKALSS) show a composition bias toward polar residues. The segment at 366–445 (ANQLRALLHQ…RVAEIVVHRP (80 aa)) is rbcS-like repeat 2, SSUL2. The segment covering 451–472 (GKPSSSSSSVGYKSAPVSSAGG) has biased composition (low complexity). A rbcS-like repeat 3, SSUL3 region spans residues 480–562 (PEVIATVRGL…RVLEQIIQRP (83 aa)). Residues 565–590 (NVVAGRSPSSSSASTSSSASSNGFGS) form a disordered region. The span at 568-587 (AGRSPSSSSASTSSSASSNG) shows a compositional bias: low complexity. A rbcS-like repeat 4, SSUL4 region spans residues 599–687 (SAVRLDNSVV…RVLETIIQRP (89 aa)).

Belongs to the gamma-class carbonic anhydrase family. In terms of assembly, probably forms homotrimers. Full length CcmM interacts with CcaA, CcmK1, CcmK2, CcmK4, CcmL, CcmN and itself, while the N-terminus of CcmM (first 249 residues) only interacts with CcaA, CcmM and CcmN. A probable CcmM-CcaA-CcmN complex as well as a CcaA-RuBisCO-CcmM complex can also be isolated. Interacts with full-length CcaA and the first 220 residues of CcaA; surface residues Gln-177 to Gln-188 are responsible in part for binding. Post-translationally, multiple forms of the protein of 73 (full length), 62, 52 (the most predominant form) and 36 kDa are seen even in the presence of protease inhibitors. CcmM52 interacts with CcaA.

The protein localises to the carboxysome. In terms of biological role, functions as a scaffold protein for the assembly of beta-carboxysomes, initiates carboxysome assembly via its N-terminal domain binding to CcaA, CcmK and CcmL. Binds HCO(3)-, suggesting it may play a role in the activity or regulation of bicarbonate dehydration. Also initiates carboxysome assembly by coalescing RuBisCO (ribulose bisphosphate carboxylase, rbcL-rbcS) via its SSU-like domains. Produced as a full-length and a shorter form; both forms are required for correct carboxysome assembly and growth. Despite its strong similarity to gamma-class carbonic anhydrase (CA) it does not have detectable CA activity. Its function is as follows. Beta-carboxysome assembly initiates when soluble RuBisCO is condensed into a liquid matrix in a pre-carboxysome by the RbcS-like domains of probably both forms of CcmM. CcmN interacts with the N-terminus of full length CcmM, and then recruits the shell proteins (CcmK) via CcmN's encapsulation peptide. CcmM73 also interacts with CcmK proteins and CcmL directly. Shell formation requires CcmK proteins and CcmO. CcmL caps the otherwise elongated carboxysome. Once fully encapsulated carboxysomes are formed, they migrate within the cell probably via interactions with the cytoskeleton. The sequence is that of Carboxysome assembly protein CcmM from Synechocystis sp. (strain ATCC 27184 / PCC 6803 / Kazusa).